The following is a 229-amino-acid chain: Putative N-acetylmannosamine-6-phosphate 2-epimerase (229 aa).

Belongs to the NanE family.

It carries out the reaction an N-acyl-D-glucosamine 6-phosphate = an N-acyl-D-mannosamine 6-phosphate. It participates in amino-sugar metabolism; N-acetylneuraminate degradation; D-fructose 6-phosphate from N-acetylneuraminate: step 3/5. Converts N-acetylmannosamine-6-phosphate (ManNAc-6-P) to N-acetylglucosamine-6-phosphate (GlcNAc-6-P). The protein is Putative N-acetylmannosamine-6-phosphate 2-epimerase of Escherichia coli O157:H7.